Consider the following 291-residue polypeptide: Phosphatidylglycerol--prolipoprotein diacylglyceryl transferase (291 aa).

The next 4 helical transmembrane spans lie at 24–44, 64–84, 100–120, and 125–145; these read WYALAYIGGIMLGWLYARALL, FILWVTIAIIVGGRVGYVLFY, WNGGMSFHGGFMGCVAAVILF, and GLPILSLGDVATAVGPIGLFL. An a 1,2-diacyl-sn-glycero-3-phospho-(1'-sn-glycerol)-binding site is contributed by Arg-147. A run of 3 helical transmembrane segments spans residues 187 to 207, 211 to 231, and 247 to 267; these read AALEGILLFTILALMIRLGAL, GLVLGSFIALYAMARIVAEFF, and MGMLLSIPMVIIGLAIVYAAW.

The protein belongs to the Lgt family.

The protein localises to the cell inner membrane. The catalysed reaction is L-cysteinyl-[prolipoprotein] + a 1,2-diacyl-sn-glycero-3-phospho-(1'-sn-glycerol) = an S-1,2-diacyl-sn-glyceryl-L-cysteinyl-[prolipoprotein] + sn-glycerol 1-phosphate + H(+). It functions in the pathway protein modification; lipoprotein biosynthesis (diacylglyceryl transfer). Functionally, catalyzes the transfer of the diacylglyceryl group from phosphatidylglycerol to the sulfhydryl group of the N-terminal cysteine of a prolipoprotein, the first step in the formation of mature lipoproteins. In Nitrobacter winogradskyi (strain ATCC 25391 / DSM 10237 / CIP 104748 / NCIMB 11846 / Nb-255), this protein is Phosphatidylglycerol--prolipoprotein diacylglyceryl transferase.